The sequence spans 138 residues: MMWWAIWCVMVVVSSAASAAPAPDSAPMDLVQIDSAGPDDESLGYAVSSLEGRYGAEAPWLYLLAEMPRDSQIGRAAVKRRMPSLSIDLPMSVLRQKLSLEKERKVHALRAAANRNFLNDIGKRGLQWSRSEQPSAYY.

Residues 1 to 19 (MMWWAIWCVMVVVSSAASA) form the signal peptide. Residues 20–78 (APAPDSAPMDLVQIDSAGPDDESLGYAVSSLEGRYGAEAPWLYLLAEMPRDSQIGRAAV) constitute a propeptide that is removed on maturation. Ile-121 is subject to Isoleucine amide. The propeptide occupies 125–138 (GLQWSRSEQPSAYY).

Belongs to the sauvagine/corticotropin-releasing factor/urotensin I family.

It localises to the secreted. Regulation of fluid secretion. The protein is Diuretic hormone 1 of Manduca sexta (Tobacco hawkmoth).